The primary structure comprises 482 residues: MSEIRKDTLKAILLELECHFTWNLLKEDIDLFEVEDTIGQQLEFLTTKSRLALYNLLAYVKHLKGQNKDALECLEQAEEIIQQEHSDKEEVRSLVTWGNYAWVYYHMDQLEEAQKYTGKIGNVCKKLSSPSNYKLECPETDCEKGWALLKFGGKYYQKAKAAFEKALEVEPDNPEFNIGYAITVYRLDDSDREGSVKSFSLGPLRKAVTLNPDNSYIKVFLALKLQDVHAEAEGEKYIEEILDQISSQPYVLRYAAKFYRRKNSWNKALELLKKALEVTPTSSFLHHQMGLCYRAQMIQIKKATHNRPKGKDKLKVDELISSAIFHFKAAMERDSMFAFAYTDLANMYAEGGQYSNAEDIFRKALRLENITDDHKHQIHYHYGRFQEFHRKSENTAIHHYLEALKVKDRSPLRTKLTSALKKLSTKRLCHNALDVQSLSALGFVYKLEGEKRQAAEYYEKAQKIDPENAEFLTALCELRLSI.

8 TPR repeats span residues Leu-51–Glu-84, Leu-94–Leu-127, Pro-138–Asn-173, Ala-181–Asn-214, Pro-249–Ser-282, Ala-338–Thr-371, His-376–Ser-410, and Val-435–Asn-468. The interaction with the 5'-triphosphate group of PPP-RNA stretch occupies residues Tyr-254–Arg-260.

This sequence belongs to the IFIT family. Monomer. Interacts with MAP3K7 and the components of the IKK core complex CHUK, IKBKB and IKBKG; the interaction synergizes the recruitment of IKK to MAP3K7 and enhances IKK phosphorylation.

It is found in the cell projection. The protein resides in the ruffle membrane. Its function is as follows. Interferon-induced RNA-binding protein involved in the human innate immune response. Has a broad and adaptable RNA structure recognition important for RNA recognition specificity in antiviral defense. Binds precursor and processed tRNAs as well as poly-U-tailed tRNA fragments. Specifically binds single-stranded RNA bearing a 5'-triphosphate group (PPP-RNA), thereby acting as a sensor of viral single-stranded RNAs. Single-stranded PPP-RNAs, which lack 2'-O-methylation of the 5' cap and bear a 5'-triphosphate group instead, are specific from viruses, providing a molecular signature to distinguish between self and non-self mRNAs by the host during viral infection. Directly binds PPP-RNA in a non-sequence-specific manner. Also recognizes and selectively binds AT-rich dsDNA. Additionally, as a mediator in innate immunity, positively regulates IKK-NFKB signaling by sinergizing the recruitment of IKK to MAP3K7. This chain is Interferon-induced protein with tetratricopeptide repeats 5 (IFIT5), found in Homo sapiens (Human).